The following is a 553-amino-acid chain: Flotillin family inner membrane protein YqiK (553 aa).

At 1 to 9 (MDDIVNSVP) the chain is on the periplasmic side. Residues 10-30 (SWMFTAIIAVCILFIIGIIFA) traverse the membrane as a helical segment. Over 31-553 (RLYRRASAEQ…STTPVEEKAE (523 aa)) the chain is Cytoplasmic.

Belongs to the band 7/mec-2 family. Flotillin subfamily. Homooligomerizes.

It localises to the cell inner membrane. It is found in the membrane raft. Found in membrane microdomains that may be equivalent to eukaryotic membrane rafts. FMMs are highly dynamic and increase in number as cells age. Flotillins are thought to be important factors in membrane fluidity. In Escherichia coli (strain K12), this protein is Flotillin family inner membrane protein YqiK (yqiK).